Here is a 278-residue protein sequence, read N- to C-terminus: Bis(5'-nucleosyl)-tetraphosphatase, symmetrical (278 aa).

Belongs to the Ap4A hydrolase family.

The enzyme catalyses P(1),P(4)-bis(5'-adenosyl) tetraphosphate + H2O = 2 ADP + 2 H(+). Its function is as follows. Hydrolyzes diadenosine 5',5'''-P1,P4-tetraphosphate to yield ADP. The polypeptide is Bis(5'-nucleosyl)-tetraphosphatase, symmetrical (Buchnera aphidicola subsp. Baizongia pistaciae (strain Bp)).